The primary structure comprises 421 residues: MDKLIITGGARLDGEIRISGAKNSALPILAATLLCDGPVTVGNLPHLHDITTMIELFGRMGIEPVIDEKLSVEIDPRTIKTLIAPYELVKTMRASILVLGPMVARFGEAEVALPGGCAIGSRPVDLHIRGLEAMGAVIDVEGGYIKAKAPEGGLRGAHFFFDTVSVTGTENIMMAAALAKGRSVLQNAAREPEVVDLANFLNAMGAKVSGAGTDTITIDGVERLGSAFYKVMPDRIETGTYLVAAAVTGGRVKVKDTDPTILEAVLEKLREAGAEITCGEDWIELNMHGKRPKAVNVRTAPYPAFPTDMQAQFISLNAIAEGTGAVIETIFENRFMHVYELHRMGAHIQVEGNTAIVTGIETLKGAPVMATDLRASASLVISALVAQGDTLIDRIYHIDRGYECIEEKLQMLGAKIRRVPG.

Position 22–23 (22–23 (KN)) interacts with phosphoenolpyruvate. Arg93 is a binding site for UDP-N-acetyl-alpha-D-glucosamine. Residue Cys117 is the Proton donor of the active site. Cys117 is modified (2-(S-cysteinyl)pyruvic acid O-phosphothioketal). UDP-N-acetyl-alpha-D-glucosamine is bound by residues 122–126 (RPVDL), Asp308, and Ile330.

It belongs to the EPSP synthase family. MurA subfamily.

The protein localises to the cytoplasm. The catalysed reaction is phosphoenolpyruvate + UDP-N-acetyl-alpha-D-glucosamine = UDP-N-acetyl-3-O-(1-carboxyvinyl)-alpha-D-glucosamine + phosphate. It functions in the pathway cell wall biogenesis; peptidoglycan biosynthesis. Its function is as follows. Cell wall formation. Adds enolpyruvyl to UDP-N-acetylglucosamine. This chain is UDP-N-acetylglucosamine 1-carboxyvinyltransferase, found in Pseudomonas fluorescens (strain Pf0-1).